Here is a 129-residue protein sequence, read N- to C-terminus: Transcription antitermination protein NusB (129 aa).

Belongs to the NusB family.

Involved in transcription antitermination. Required for transcription of ribosomal RNA (rRNA) genes. Binds specifically to the boxA antiterminator sequence of the ribosomal RNA (rrn) operons. The protein is Transcription antitermination protein NusB of Staphylococcus aureus (strain bovine RF122 / ET3-1).